Consider the following 241-residue polypeptide: Uridylate kinase (241 aa).

14–17 (KASG) is a binding site for ATP. The involved in allosteric activation by GTP stretch occupies residues 22–27 (GDQGFG). Gly-56 is a binding site for UMP. ATP is bound by residues Gly-57 and Arg-61. UMP contacts are provided by residues Asp-76 and 137-144 (TGNPFFTT). The ATP site is built by Thr-164, Gln-165, Tyr-170, and Asp-173.

The protein belongs to the UMP kinase family. Homohexamer.

The protein resides in the cytoplasm. It carries out the reaction UMP + ATP = UDP + ADP. It functions in the pathway pyrimidine metabolism; CTP biosynthesis via de novo pathway; UDP from UMP (UMPK route): step 1/1. Allosterically activated by GTP. Inhibited by UTP. Functionally, catalyzes the reversible phosphorylation of UMP to UDP. In Agrobacterium fabrum (strain C58 / ATCC 33970) (Agrobacterium tumefaciens (strain C58)), this protein is Uridylate kinase.